Consider the following 324-residue polypeptide: Succinylglutamate desuccinylase (324 aa).

Positions 53, 56, and 148 each coordinate Zn(2+). Glu-211 is an active-site residue.

It belongs to the AspA/AstE family. Succinylglutamate desuccinylase subfamily. Zn(2+) is required as a cofactor.

It catalyses the reaction N-succinyl-L-glutamate + H2O = L-glutamate + succinate. It participates in amino-acid degradation; L-arginine degradation via AST pathway; L-glutamate and succinate from L-arginine: step 5/5. In terms of biological role, transforms N(2)-succinylglutamate into succinate and glutamate. In Acinetobacter baumannii (strain AB0057), this protein is Succinylglutamate desuccinylase.